Here is an 82-residue protein sequence, read N- to C-terminus: Bowman-Birk type proteinase inhibitor (82 aa).

A disordered region spans residues 1 to 24 (SGHHDETTDEPSESSKPCCDQCSC). Cystine bridges form between Cys-18/Cys-72, Cys-19/Cys-34, Cys-22/Cys-68, Cys-24/Cys-32, Cys-42/Cys-49, Cys-46/Cys-61, and Cys-51/Cys-59.

This sequence belongs to the Bowman-Birk serine protease inhibitor family.

Functionally, trypsin and chymotrypsin are inhibited simultaneously. There are two separate reactive sites for trypsin and chymotrypsin but they do not inhibit simultaneously. The protein is Bowman-Birk type proteinase inhibitor of Phaseolus angularis (Azuki bean).